Consider the following 804-residue polypeptide: Phenylalanine--tRNA ligase beta subunit (804 aa).

Positions 40–155 constitute a tRNA-binding domain; it reads GEGIKGVVIG…GDAETGADAL (116 aa). Residues 409 to 484 enclose the B5 domain; that stretch reads IKENVIRLSV…RLYGYDNIPS (76 aa). Mg(2+)-binding residues include D462, D468, E471, and E472. Residues 710 to 803 form the FDX-ACB domain; sequence PKYPSVTRDI…LEDKYQAVLR (94 aa).

It belongs to the phenylalanyl-tRNA synthetase beta subunit family. Type 1 subfamily. In terms of assembly, tetramer of two alpha and two beta subunits. Requires Mg(2+) as cofactor.

The protein resides in the cytoplasm. It catalyses the reaction tRNA(Phe) + L-phenylalanine + ATP = L-phenylalanyl-tRNA(Phe) + AMP + diphosphate + H(+). This Bacillus licheniformis (strain ATCC 14580 / DSM 13 / JCM 2505 / CCUG 7422 / NBRC 12200 / NCIMB 9375 / NCTC 10341 / NRRL NRS-1264 / Gibson 46) protein is Phenylalanine--tRNA ligase beta subunit.